Here is a 934-residue protein sequence, read N- to C-terminus: Glycine dehydrogenase (decarboxylating) (934 aa).

The residue at position 687 (Lys-687) is an N6-(pyridoxal phosphate)lysine.

The protein belongs to the GcvP family. As to quaternary structure, the glycine cleavage system is composed of four proteins: P, T, L and H. Requires pyridoxal 5'-phosphate as cofactor.

It catalyses the reaction N(6)-[(R)-lipoyl]-L-lysyl-[glycine-cleavage complex H protein] + glycine + H(+) = N(6)-[(R)-S(8)-aminomethyldihydrolipoyl]-L-lysyl-[glycine-cleavage complex H protein] + CO2. Its function is as follows. The glycine cleavage system catalyzes the degradation of glycine. The P protein binds the alpha-amino group of glycine through its pyridoxal phosphate cofactor; CO(2) is released and the remaining methylamine moiety is then transferred to the lipoamide cofactor of the H protein. The polypeptide is Glycine dehydrogenase (decarboxylating) (Nocardia farcinica (strain IFM 10152)).